Reading from the N-terminus, the 505-residue chain is Probable cytochrome P450 28c1 (505 aa).

C444 lines the heme pocket.

This sequence belongs to the cytochrome P450 family. Heme serves as cofactor.

Its subcellular location is the endoplasmic reticulum membrane. It is found in the microsome membrane. Its function is as follows. May be involved in the metabolism of insect hormones and in the breakdown of synthetic insecticides. This chain is Probable cytochrome P450 28c1 (Cyp28c1), found in Drosophila melanogaster (Fruit fly).